Here is a 593-residue protein sequence, read N- to C-terminus: ABC1 family protein lscO (593 aa).

Disordered regions lie at residues 1–29 and 441–467; these read MDVAFPGMERHDEKNPPGDDGTKPTGGKK and PYKNPSSSDDESGESWQRTKETPEERK. 2 stretches are compositionally biased toward basic and acidic residues: residues 8–22 and 457–467; these read MERHDEKNPPGDDGT and QRTKETPEERK.

The protein belongs to the protein kinase superfamily. ADCK protein kinase family.

ABC1 family protein; part of the gene cluster that mediates the biosynthesis of the lipopeptide antibiotics leucinostatins that show extensive biological activities, including antimalarial, antiviral, antibacterial, antifungal, and antitumor activities, as well as phytotoxic. The function of lcsO within the leucinostatins biosynthesis has not been identified yet. This is ABC1 family protein lscO from Purpureocillium lilacinum (Paecilomyces lilacinus).